The chain runs to 321 residues: Glucokinase (321 aa).

A8–T13 provides a ligand contact to ATP.

The protein belongs to the bacterial glucokinase family.

It is found in the cytoplasm. The enzyme catalyses D-glucose + ATP = D-glucose 6-phosphate + ADP + H(+). The sequence is that of Glucokinase from Photorhabdus laumondii subsp. laumondii (strain DSM 15139 / CIP 105565 / TT01) (Photorhabdus luminescens subsp. laumondii).